A 765-amino-acid polypeptide reads, in one-letter code: 5-methyltetrahydropteroyltriglutamate--homocysteine methyltransferase (765 aa).

Residues 18–21 (REWK) and lysine 114 each bind 5-methyltetrahydropteroyltri-L-glutamate. Residues 437–439 (IGS) and glutamate 490 contribute to the L-homocysteine site. Residues 437 to 439 (IGS) and glutamate 490 contribute to the L-methionine site. Tryptophan 567 serves as a coordination point for 5-methyltetrahydropteroyltri-L-glutamate. Aspartate 605 provides a ligand contact to L-homocysteine. Aspartate 605 is a binding site for L-methionine. 5-methyltetrahydropteroyltri-L-glutamate is bound at residue glutamate 611. Residues histidine 647, cysteine 649, and glutamate 671 each coordinate Zn(2+). The active-site Proton donor is the histidine 700. Residue cysteine 732 participates in Zn(2+) binding.

The protein belongs to the vitamin-B12 independent methionine synthase family. Zn(2+) is required as a cofactor.

The enzyme catalyses 5-methyltetrahydropteroyltri-L-glutamate + L-homocysteine = tetrahydropteroyltri-L-glutamate + L-methionine. It participates in amino-acid biosynthesis; L-methionine biosynthesis via de novo pathway; L-methionine from L-homocysteine (MetE route): step 1/1. In terms of biological role, catalyzes the transfer of a methyl group from 5-methyltetrahydrofolate to homocysteine resulting in methionine formation. This is 5-methyltetrahydropteroyltriglutamate--homocysteine methyltransferase from Listeria monocytogenes serotype 4b (strain F2365).